The following is a 1214-amino-acid chain: Protein argonaute-2 (1214 aa).

Positions 1-412 (MGKKDKNKKG…GSIKRGTIGK (412 aa)) are disordered. 2 stretches are compositionally biased toward low complexity: residues 18–93 (PQPQ…QQKS) and 107–117 (KQQVQGWTKQG). Composition is skewed to gly residues over residues 118–131 (QQGGHQQGRQGQDG), 141–154 (QQGGHQQGRQGQEG), 164–177 (QQGGHQQGRQGQEG), 187–200 (QQGGHQQGRQGQEG), 210–223 (QQGGHQQGRQGQEG), 233–246 (QQGGHQQGRQGQEG), and 256–269 (QQGGHQQGRQGQEG). Residues 270-282 (GYQQRPPGQQQGG) are compositionally biased toward low complexity. 3 stretches are compositionally biased toward gly residues: residues 302-315 (QQGGHQQGRQGQEG), 325-338 (QQGGHQQGRQGQEG), and 348-361 (QQGGHQQGRQGQEG). Low complexity predominate over residues 362-394 (GYQQRPPGQQPNQTQSQGQYQSRGPPQQQQAAP). The 110-residue stretch at 608-717 (LERFSLKAKI…LPIELCSIEE (110 aa)) folds into the PAZ domain. The tract at residues 681 to 686 (YFHSRN) is interaction with guide RNA. In terms of domain architecture, Piwi spans 885–1186 (LAIVIIPQFR…ARGRVYLTGT (302 aa)). Positions 965 and 1037 each coordinate a divalent metal cation. Interaction with guide RNA stretches follow at residues 1075-1076 (KR), 1119-1127 (HQAIQGTAK), and 1156-1178 (FPRCNRSVSYPAPAYLAHLVAAR). Position 1173 (His-1173) interacts with a divalent metal cation.

This sequence belongs to the argonaute family. Ago subfamily. In terms of assembly, interacts with Fmr1, Dcr-1 and vig to form the RNA-induced silencing complex (RISC), a ribonucleoprotein (RNP) complex involved in translation regulation, other components of the complex are RpL5, RpL11 and Rm62. As part of the RISC complex, interacts with Tudor-SN. Interacts with Taf11. (Microbial infection) Interacts with cricket paralysis virus protein 1A; this interaction may block the RISC activity. Mg(2+) serves as cofactor. The cofactor is Mn(2+).

It is found in the nucleus. The protein localises to the cytoplasm. Its subcellular location is the cytoplasmic ribonucleoprotein granule. Functionally, essential for RNA interference (RNAi); double-stranded RNA induces potent and specific gene silencing. RNAi is mediated by the RNA-induced silencing complex (RISC), a sequence-specific, multicomponent nuclease that destroys or silences messenger RNAs homologous to the silencing trigger. The sequence is that of Protein argonaute-2 from Drosophila melanogaster (Fruit fly).